We begin with the raw amino-acid sequence, 221 residues long: Ribosomal RNA small subunit methyltransferase Nep1 (221 aa).

S-adenosyl-L-methionine contacts are provided by residues Gly-174, Gly-179, and 196 to 201 (LGEVAM).

This sequence belongs to the class IV-like SAM-binding methyltransferase superfamily. RNA methyltransferase NEP1 family. In terms of assembly, homodimer.

It catalyses the reaction a pseudouridine in rRNA + S-adenosyl-L-methionine = an N(1)-methylpseudouridine in rRNA + S-adenosyl-L-homocysteine + H(+). Its function is as follows. Methyltransferase involved in ribosomal biogenesis. Specifically catalyzes the N1-methylation of the pseudouridine corresponding to position 914 in M.jannaschii 16S rRNA. The chain is Ribosomal RNA small subunit methyltransferase Nep1 from Pyrobaculum arsenaticum (strain DSM 13514 / JCM 11321 / PZ6).